Reading from the N-terminus, the 411-residue chain is Argininosuccinate lyase (411 aa).

The protein belongs to the lyase 1 family. Argininosuccinate lyase subfamily.

The protein localises to the cytoplasm. The catalysed reaction is 2-(N(omega)-L-arginino)succinate = fumarate + L-arginine. Its pathway is amino-acid biosynthesis; L-arginine biosynthesis; L-arginine from L-ornithine and carbamoyl phosphate: step 3/3. This chain is Argininosuccinate lyase, found in Legionella pneumophila (strain Lens).